A 234-amino-acid chain; its full sequence is Leucyl/phenylalanyl-tRNA--protein transferase (234 aa).

This sequence belongs to the L/F-transferase family.

It is found in the cytoplasm. The catalysed reaction is N-terminal L-lysyl-[protein] + L-leucyl-tRNA(Leu) = N-terminal L-leucyl-L-lysyl-[protein] + tRNA(Leu) + H(+). It carries out the reaction N-terminal L-arginyl-[protein] + L-leucyl-tRNA(Leu) = N-terminal L-leucyl-L-arginyl-[protein] + tRNA(Leu) + H(+). It catalyses the reaction L-phenylalanyl-tRNA(Phe) + an N-terminal L-alpha-aminoacyl-[protein] = an N-terminal L-phenylalanyl-L-alpha-aminoacyl-[protein] + tRNA(Phe). In terms of biological role, functions in the N-end rule pathway of protein degradation where it conjugates Leu, Phe and, less efficiently, Met from aminoacyl-tRNAs to the N-termini of proteins containing an N-terminal arginine or lysine. The chain is Leucyl/phenylalanyl-tRNA--protein transferase from Salmonella arizonae (strain ATCC BAA-731 / CDC346-86 / RSK2980).